We begin with the raw amino-acid sequence, 134 residues long: Large ribosomal subunit protein eL32 (134 aa).

This sequence belongs to the eukaryotic ribosomal protein eL32 family.

In Spodoptera frugiperda (Fall armyworm), this protein is Large ribosomal subunit protein eL32 (RpL32).